Here is a 400-residue protein sequence, read N- to C-terminus: Dihydrolipoyllysine-residue succinyltransferase component of 2-oxoglutarate dehydrogenase complex (400 aa).

The region spanning 2–77 is the Lipoyl-binding domain; it reads GVKIIVPSLG…AVGEEIGDIN (76 aa). K43 is subject to N6-lipoyllysine. The segment covering 85-97 has biased composition (polar residues); sequence NSNEAAKPQTASQ. Positions 85 to 113 are disordered; the sequence is NSNEAAKPQTASQPVPEKVPKKPAVANNT. The Peripheral subunit-binding (PSBD) domain occupies 113 to 150; that stretch reads TLAPSVQKLVTENKLDPNNIKGTGKDGRITKGDVLETM. Catalysis depends on residues H371 and D375.

It belongs to the 2-oxoacid dehydrogenase family. As to quaternary structure, forms a 24-polypeptide structural core with octahedral symmetry. Part of the 2-oxoglutarate dehydrogenase (OGDH) complex composed of E1 (2-oxoglutarate dehydrogenase), E2 (dihydrolipoamide succinyltransferase) and E3 (dihydrolipoamide dehydrogenase); the complex contains multiple copies of the three enzymatic components (E1, E2 and E3). Requires (R)-lipoate as cofactor.

It carries out the reaction N(6)-[(R)-dihydrolipoyl]-L-lysyl-[protein] + succinyl-CoA = N(6)-[(R)-S(8)-succinyldihydrolipoyl]-L-lysyl-[protein] + CoA. The protein operates within amino-acid degradation; L-lysine degradation via saccharopine pathway; glutaryl-CoA from L-lysine: step 6/6. Its function is as follows. E2 component of the 2-oxoglutarate dehydrogenase (OGDH) complex which catalyzes the second step in the conversion of 2-oxoglutarate to succinyl-CoA and CO(2). This is Dihydrolipoyllysine-residue succinyltransferase component of 2-oxoglutarate dehydrogenase complex (sucB) from Rickettsia bellii (strain RML369-C).